Consider the following 432-residue polypeptide: MGNNVVVLGTQWGDEGKGKIVDLLTEDAKYVVRYQGGHNAGHTLVIDGQKTVLHLIPSGILRNNVKCIIGNGVVLSPEALIKEMSGLEDRGVPVRERLFISEACPLILPYHVALDQAREAARGKKAIGTTGRGIGPAYEDKVARRGLRVGDLFDMASFAEKLQEVMAFHNFQLEHFYKVEPVSYEAVLEQAKGYAELLTSMVIDVTNELDAARKRGDKIMFEGAQGTLLDIDHGTYPYVTSSNTTAGGVAAGSGFGPRHLGYILGIAKAYCTRVGAGPFPTELFDEVGDHLGTKGHEFGATTGRKRRCGWFDAVAMRRAIQINSVTGFCLTKLDVLDGLKEIKICTGYQMPDGSIAEVSPMAADAFENVTPIFETMPGWSETTFGAKTLAELPQTALDYIKRIEELTGVPVDIISTGPDRNETIIKVHPFSA.

Residues 13–19 (GDEGKGK) and 41–43 (GHT) each bind GTP. Catalysis depends on Asp-14, which acts as the Proton acceptor. 2 residues coordinate Mg(2+): Asp-14 and Gly-41. IMP is bound by residues 14–17 (DEGK), 39–42 (NAGH), Thr-130, Arg-144, Gln-225, Thr-240, and Arg-304. Residue His-42 is the Proton donor of the active site. 300 to 306 (ATTGRKR) lines the substrate pocket. Residues Arg-306, 332 to 334 (KLD), and 415 to 417 (STG) each bind GTP.

This sequence belongs to the adenylosuccinate synthetase family. Homodimer. The cofactor is Mg(2+).

It localises to the cytoplasm. It carries out the reaction IMP + L-aspartate + GTP = N(6)-(1,2-dicarboxyethyl)-AMP + GDP + phosphate + 2 H(+). It functions in the pathway purine metabolism; AMP biosynthesis via de novo pathway; AMP from IMP: step 1/2. In terms of biological role, plays an important role in the de novo pathway of purine nucleotide biosynthesis. Catalyzes the first committed step in the biosynthesis of AMP from IMP. The polypeptide is Adenylosuccinate synthetase (Vibrio cholerae serotype O1 (strain M66-2)).